Consider the following 1354-residue polypeptide: Rho-associated protein kinase 1 (1354 aa).

Ser2 bears the N-acetylserine mark. The Protein kinase domain occupies 76–338 (YEVVKVIGRG…VEEIKRHLFF (263 aa)). ATP is bound by residues 82–90 (IGRGAFGEV) and Lys105. The active-site Proton acceptor is the Asp198. The AGC-kinase C-terminal domain occupies 341–409 (DQWAWETLRD…YSNRRYLSSA (69 aa)). An interaction with FHOD1 region spans residues 368–727 (FDDLEEDKGE…KKLKEEREAR (360 aa)). Positions 422-692 (KSLQESLQKT…RLEQEVNEHK (271 aa)) form a coiled coil. Residues 479-556 (STVSQIEKEK…LEEANDLLRT (78 aa)) form the REM-1 domain. At Lys647 the chain carries N6-acetyllysine. Residues 707-946 (EAKSVAMCEM…TVSRLEEANS (240 aa)) are SHROOM3 binding. Residues 949–1015 (TKDIEILRRE…LAEIMNRKDF (67 aa)) form the RhoBD domain. The interval 998–1010 (LKTQAVNKLAEIM) is RHOA binding. Residues 1011-1102 (NRKDFKIDRK…KLLDLSDSTS (92 aa)) adopt a coiled-coil conformation. Residues Ser1105 and Ser1108 each carry the phosphoserine modification. The tract at residues 1115 to 1354 (NLPESRIEGW…VVKNTSGKTS (240 aa)) is auto-inhibitory. The PH domain maps to 1118-1317 (ESRIEGWLSV…WVTHLVKKIP (200 aa)). The Phorbol-ester/DAG-type zinc-finger motif lies at 1228-1281 (GHEFIPTLYHFPANCDACAKPLWHVFKPPPALECRRCHVKCHRDHLDKKEDLIC). Residues 1320–1354 (PPSGFVRASPRTLSTRSTANQSFRKVVKNTSGKTS) are disordered. At Ser1328 the chain carries Phosphoserine. A compositionally biased stretch (polar residues) spans 1330-1354 (RTLSTRSTANQSFRKVVKNTSGKTS).

The protein belongs to the protein kinase superfamily. AGC Ser/Thr protein kinase family. In terms of assembly, homodimer. Interacts with RHOB, RHOC, MYLC2B and PTEN. Interacts with ITGB1BP1 (via N-terminus and PTB domain). Interacts with RHOA (activated by GTP), CHORDC1, DAPK3, GEM, JIP3, RHOE, PPP1R12A, PFN1, LIMK1, LIMK2 and TSG101. Interacts with FHOD1 in a Src-dependent manner. Interacts with SHROOM3. The cofactor is Mg(2+). In terms of processing, autophosphorylated on serine and threonine residues. Cleaved by caspase-3 during apoptosis. This leads to constitutive activation of the kinase and membrane blebbing. Detected in blood platelets.

The protein resides in the cytoplasm. It localises to the cytoskeleton. It is found in the microtubule organizing center. The protein localises to the centrosome. Its subcellular location is the centriole. The protein resides in the golgi apparatus membrane. It localises to the cell projection. It is found in the bleb. The protein localises to the cell membrane. Its subcellular location is the lamellipodium. The protein resides in the ruffle. The enzyme catalyses L-seryl-[protein] + ATP = O-phospho-L-seryl-[protein] + ADP + H(+). It catalyses the reaction L-threonyl-[protein] + ATP = O-phospho-L-threonyl-[protein] + ADP + H(+). Its activity is regulated as follows. Activated by RHOA binding. Inhibited by Y-27632. Functionally, protein kinase which is a key regulator of the actin cytoskeleton and cell polarity. Involved in regulation of smooth muscle contraction, actin cytoskeleton organization, stress fiber and focal adhesion formation, neurite retraction, cell adhesion and motility via phosphorylation of DAPK3, GFAP, LIMK1, LIMK2, MYL9/MLC2, TPPP, PFN1 and PPP1R12A. Phosphorylates FHOD1 and acts synergistically with it to promote SRC-dependent non-apoptotic plasma membrane blebbing. Phosphorylates JIP3 and regulates the recruitment of JNK to JIP3 upon UVB-induced stress. Acts as a suppressor of inflammatory cell migration by regulating PTEN phosphorylation and stability. Acts as a negative regulator of VEGF-induced angiogenic endothelial cell activation. Required for centrosome positioning and centrosome-dependent exit from mitosis. Plays a role in terminal erythroid differentiation. Inhibits podocyte motility via regulation of actin cytoskeletal dynamics and phosphorylation of CFL1. Promotes keratinocyte terminal differentiation. Involved in osteoblast compaction through the fibronectin fibrillogenesis cell-mediated matrix assembly process, essential for osteoblast mineralization. May regulate closure of the eyelids and ventral body wall by inducing the assembly of actomyosin bundles. The protein is Rho-associated protein kinase 1 (ROCK1) of Homo sapiens (Human).